A 352-amino-acid polypeptide reads, in one-letter code: MKVSVIIPTYNERENLEELFSRIDNALQGLNYEIVVVDDDSPDRTWEKAQELSSKYPVKVIRRTKEKGLSSAVIRGFKEASGDVFVVMDADLQHPPEVIPKLIEAIKNGSDIAIGSRYVKGGKVENWPFYRKLISKGAIMVGRIALPKIRDIKDPVSGFFALRKEVVEGVELNPIGFKILMEILIKGKYSKVVEVPFTFGIRARGESKLKGKTIFEYLRHIYRLMKWEGEIDRIVKFSIVGLSGILVNEGFLWLFVNLGIPKEIAVIPAVELSILNNFFWNDIWTFKDIRRGSIFSRLLKFHIAALSGAVVNFIVYWILLFLGIHYLIANLVGIVLSFGVRYVINRHVTWAT.

Residues 1–229 (MKVSVIIPTY…HIYRLMKWEG (229 aa)) are Cytoplasmic-facing. Residues Pro8, Tyr10, Glu12, Val37, Asp39, Asp89, Ala90, Asp91, Gln93, Arg117, Val156, Lys178, Arg202, and Lys208 each contribute to the GDP-alpha-D-mannose site. 2 residues coordinate Mg(2+): Asp91 and Gln93. Mn(2+) contacts are provided by Asp91 and Gln93. Residues 230-256 (EIDRIVKFSIVGLSGILVNEGFLWLFV) traverse the membrane as a helical segment. Residues 257-261 (NLGIP) are Extracellular-facing. A helical transmembrane segment spans residues 262-286 (KEIAVIPAVELSILNNFFWNDIWTF). The Cytoplasmic segment spans residues 287 to 293 (KDIRRGS). A helical transmembrane segment spans residues 294–320 (IFSRLLKFHIAALSGAVVNFIVYWILL). Over 321-325 (FLGIH) the chain is Extracellular. The chain crosses the membrane as a helical span at residues 326-350 (YLIANLVGIVLSFGVRYVINRHVTW). Over 351 to 352 (AT) the chain is Cytoplasmic.

It belongs to the glycosyltransferase 2 family. Requires Mg(2+) as cofactor. The cofactor is Mn(2+). It depends on Ca(2+) as a cofactor.

The protein localises to the cell membrane. It carries out the reaction a di-trans,poly-cis-dolichyl phosphate + GDP-alpha-D-mannose = a di-trans,poly-cis-dolichyl beta-D-mannosyl phosphate + GDP. It participates in protein modification; protein glycosylation. In terms of biological role, transfers mannose from GDP-mannose to dolichol monophosphate to form dolichol phosphate mannose (Dol-P-Man) which is the mannosyl donor in pathways leading to N-glycosylation, glycosyl phosphatidylinositol membrane anchoring, and O-mannosylation of proteins. In Pyrococcus furiosus (strain ATCC 43587 / DSM 3638 / JCM 8422 / Vc1), this protein is Dolichol-phosphate mannosyltransferase.